The following is a 207-amino-acid chain: Ribosomal RNA large subunit methyltransferase E (207 aa).

S-adenosyl-L-methionine-binding residues include Gly-60, Trp-62, Asp-80, Asp-96, and Asp-121. Lys-161 functions as the Proton acceptor in the catalytic mechanism.

Belongs to the class I-like SAM-binding methyltransferase superfamily. RNA methyltransferase RlmE family.

Its subcellular location is the cytoplasm. It carries out the reaction uridine(2552) in 23S rRNA + S-adenosyl-L-methionine = 2'-O-methyluridine(2552) in 23S rRNA + S-adenosyl-L-homocysteine + H(+). Its function is as follows. Specifically methylates the uridine in position 2552 of 23S rRNA at the 2'-O position of the ribose in the fully assembled 50S ribosomal subunit. This chain is Ribosomal RNA large subunit methyltransferase E, found in Thioalkalivibrio sulfidiphilus (strain HL-EbGR7).